A 311-amino-acid polypeptide reads, in one-letter code: Acetyl-coenzyme A carboxylase carboxyl transferase subunit alpha (311 aa).

A CoA carboxyltransferase C-terminal domain is found at 36 to 286 (ELKKEVERVY…VNYFLKSLEE (251 aa)).

This sequence belongs to the AccA family. As to quaternary structure, acetyl-CoA carboxylase is a heterohexamer composed of biotin carboxyl carrier protein (AccB), biotin carboxylase (AccC) and two subunits each of ACCase subunit alpha (AccA) and ACCase subunit beta (AccD).

It is found in the cytoplasm. The enzyme catalyses N(6)-carboxybiotinyl-L-lysyl-[protein] + acetyl-CoA = N(6)-biotinyl-L-lysyl-[protein] + malonyl-CoA. The protein operates within lipid metabolism; malonyl-CoA biosynthesis; malonyl-CoA from acetyl-CoA: step 1/1. Functionally, component of the acetyl coenzyme A carboxylase (ACC) complex. First, biotin carboxylase catalyzes the carboxylation of biotin on its carrier protein (BCCP) and then the CO(2) group is transferred by the carboxyltransferase to acetyl-CoA to form malonyl-CoA. The sequence is that of Acetyl-coenzyme A carboxylase carboxyl transferase subunit alpha from Wolinella succinogenes (strain ATCC 29543 / DSM 1740 / CCUG 13145 / JCM 31913 / LMG 7466 / NCTC 11488 / FDC 602W) (Vibrio succinogenes).